We begin with the raw amino-acid sequence, 466 residues long: Glutamate--tRNA ligase (466 aa).

A 'HIGH' region motif is present at residues 10–20 (PSPTGFLHIGG). Positions 252-256 (KLSKR) match the 'KMSKS' region motif. Residue lysine 255 coordinates ATP.

This sequence belongs to the class-I aminoacyl-tRNA synthetase family. Glutamate--tRNA ligase type 1 subfamily. In terms of assembly, monomer.

It localises to the cytoplasm. It catalyses the reaction tRNA(Glu) + L-glutamate + ATP = L-glutamyl-tRNA(Glu) + AMP + diphosphate. Catalyzes the attachment of glutamate to tRNA(Glu) in a two-step reaction: glutamate is first activated by ATP to form Glu-AMP and then transferred to the acceptor end of tRNA(Glu). This chain is Glutamate--tRNA ligase, found in Mycoplasmopsis synoviae (strain 53) (Mycoplasma synoviae).